The following is a 385-amino-acid chain: Methionine aminopeptidase 1 (385 aa).

The C6H2-type zinc-finger motif lies at 6–59; it reads SRVCETEGCSSEAKLQCPTCIKLGIQGSYFCSQECFKGSWASHKLLHKKAKDDK. Zn(2+)-binding residues include Cys9, Cys14, Cys22, Cys25, Cys36, Cys40, His48, and His52. An a protein-binding site is contributed by His203. Asp220, Asp231, and His294 together coordinate Zn(2+). A protein is bound at residue His301. Residues Glu327 and Glu358 each coordinate Zn(2+).

Belongs to the peptidase M24A family. Methionine aminopeptidase type 1 subfamily. As to quaternary structure, associates with the 60S ribosomal subunit of the 80S translational complex. Requires Zn(2+) as cofactor. It depends on Co(2+) as a cofactor. The cofactor is Mn(2+). Fe(2+) serves as cofactor.

The protein localises to the cytoplasm. The catalysed reaction is Release of N-terminal amino acids, preferentially methionine, from peptides and arylamides.. Its function is as follows. Cotranslationally removes the N-terminal methionine from nascent proteins. The N-terminal methionine is often cleaved when the second residue in the primary sequence is small and uncharged (Met-Ala-, Cys, Gly, Pro, Ser, Thr, or Val). The chain is Methionine aminopeptidase 1 (metap1) from Xenopus tropicalis (Western clawed frog).